The sequence spans 58 residues: MKQDMIDYLMKNPQVLTKLENGEASLIGIPDKLIPSIVDIFNKKMTLSKKCKGIFWEQ.

A propeptide spanning residues 1-52 is cleaved from the precursor; that stretch reads MKQDMIDYLMKNPQVLTKLENGEASLIGIPDKLIPSIVDIFNKKMTLSKKCK. Residue tryptophan 56 is the site of 3'-geranyl-2',N2-cyclotryptophan; in strain RO-E-2 /NRRL B-23055 attachment.

Interacts directly with the sensor histidine kinase ComP and stimulates its activity. In terms of processing, trp-56 is modified by geranylation, which is essential for activity. Modified by the tryptophan prenyltransferase ComQ before export to the extracellular environment. The type of isoprenyl derivative differs among the different pherotypes and depends on ComX primary sequence.

Its subcellular location is the secreted. Its function is as follows. Part of a major quorum-sensing system that regulates the development of genetic competence. Acts through the activation of the two-component regulatory system ComP/ComA composed of a sensor histidine kinase, ComP, and a response regulator, ComA. This Bacillus spizizenii (Bacillus subtilis subsp. spizizenii) protein is ComX pheromone.